Here is a 94-residue protein sequence, read N- to C-terminus: uncharacterized protein (94 aa).

An N-terminal signal peptide occupies residues 1-22 (MIMKNCLLLGALLMGFTGVAMA).

This is an uncharacterized protein from Escherichia coli (strain K12).